Consider the following 232-residue polypeptide: Charged multivesicular body protein 4c (232 aa).

2 disordered regions span residues 1–23 (MSKLGKFFKGTRSSRARAAPSAQ) and 177–232 (NKKM…AWAT). The segment at 1-153 (MSKLGKFFKG…EISEAFSQRV (153 aa)) is intramolecular interaction with C-terminus. Coiled-coil stretches lie at residues 21–45 (SAQEALARLRETEEMLAKKQEYLEN) and 125–185 (LNKI…SLEL). Positions 154–232 (QFADGFDEAE…DFKQLAAWAT (79 aa)) are intramolecular interaction with N-terminus. Residue Ser-210 is modified to Phosphoserine; by AURKB.

It belongs to the SNF7 family. Probable core component of the endosomal sorting required for transport complex III (ESCRT-III). ESCRT-III components are thought to multimerize to form a flat lattice on the perimeter membrane of the endosome. Several assembly forms of ESCRT-III may exist that interact and act sequentially. Self-associates. Interacts with CHMP2A. Interacts with CHMP4A. Interacts with CHMP4B. Interacts with CHMP6. Interacts with VPS4A. Interacts with PDCD6IP; the interaction is direct. Post-translationally, phosphorylated at Ser-210 by AURKB during cytokinesis: together with ZFYVE19/ANCHR, phosphorylated CHMP4C retains abscission-competent VPS4 (VPS4A and/or VPS4B) at the midbody ring until abscission checkpoint signaling is terminated at late cytokinesis.

It localises to the cytoplasm. It is found in the cytosol. Its subcellular location is the late endosome membrane. The protein localises to the midbody. The protein resides in the midbody ring. In terms of biological role, probable core component of the endosomal sorting required for transport complex III (ESCRT-III) which is involved in multivesicular bodies (MVBs) formation and sorting of endosomal cargo proteins into MVBs. MVBs contain intraluminal vesicles (ILVs) that are generated by invagination and scission from the limiting membrane of the endosome and mostly are delivered to lysosomes enabling degradation of membrane proteins, such as stimulated growth factor receptors, lysosomal enzymes and lipids. The MVB pathway appears to require the sequential function of ESCRT-O, -I,-II and -III complexes. ESCRT-III proteins mostly dissociate from the invaginating membrane before the ILV is released. The ESCRT machinery also functions in topologically equivalent membrane fission events, such as the terminal stages of cytokinesis. Key component of the cytokinesis checkpoint, a process required to delay abscission to prevent both premature resolution of intercellular chromosome bridges and accumulation of DNA damage: upon phosphorylation by AURKB, together with ZFYVE19/ANCHR, retains abscission-competent VPS4 (VPS4A and/or VPS4B) at the midbody ring until abscission checkpoint signaling is terminated at late cytokinesis. Deactivation of AURKB results in dephosphorylation of CHMP4C followed by its dissociation from ANCHR and VPS4 and subsequent abscission. ESCRT-III proteins are believed to mediate the necessary vesicle extrusion and/or membrane fission activities, possibly in conjunction with the AAA ATPase VPS4. CHMP4A/B/C are required for the exosomal release of SDCBP, CD63 and syndecan. In Mus musculus (Mouse), this protein is Charged multivesicular body protein 4c (Chmp4c).